The following is a 264-amino-acid chain: MAFTKISLVLLLCLLGFFSETVKSQNCGCAPNLCCSQFGYCGTDDAYCGVGCRSGPCRGSGTPTGGSVGSIVTQGFFNNIINQAGNGCAGKRFYTRDSFVNAANTFPNFANSVTRREIATMFAHFTHETGHFCYIEEINGATRNYCQSSNTQYPCAPGKGYFGRGPIQLSWNYNYGACGQSLGLDLLRQPELVGSNPTVAFRTGLWFWMNSVRPVLNQGFGATIRAINGMECNGGNSGAVNARIGYYRDYCGQLGVDPGPNLSC.

Residues 1–24 form the signal peptide; the sequence is MAFTKISLVLLLCLLGFFSETVKS. The region spanning 25 to 59 is the Chitin-binding type-1 domain; sequence QNCGCAPNLCCSQFGYCGTDDAYCGVGCRSGPCRG. 4 disulfides stabilise this stretch: cysteine 27-cysteine 35, cysteine 29-cysteine 41, cysteine 34-cysteine 48, and cysteine 52-cysteine 57. The segment at 66–264 is catalytic; it reads GSVGSIVTQG…GVDPGPNLSC (199 aa). The active-site Proton donor is glutamate 128. Asparagine 261 is a glycosylation site (N-linked (GlcNAc...) asparagine).

The protein belongs to the glycosyl hydrolase 19 family. Chitinase class I subfamily.

It carries out the reaction Random endo-hydrolysis of N-acetyl-beta-D-glucosaminide (1-&gt;4)-beta-linkages in chitin and chitodextrins.. In Arabidopsis thaliana (Mouse-ear cress), this protein is Endochitinase At2g43590.